Consider the following 407-residue polypeptide: Acetate kinase (407 aa).

Asparagine 10 is a Mg(2+) binding site. Lysine 17 contacts ATP. Residue arginine 91 participates in substrate binding. Residue aspartate 150 is the Proton donor/acceptor of the active site. ATP contacts are provided by residues 210-214, 285-287, and 338-342; these read HLGNG, DCR, and GIGEN. Glutamate 392 is a Mg(2+) binding site.

The protein belongs to the acetokinase family. Homodimer. Requires Mg(2+) as cofactor. Mn(2+) is required as a cofactor.

The protein localises to the cytoplasm. The catalysed reaction is acetate + ATP = acetyl phosphate + ADP. The protein operates within metabolic intermediate biosynthesis; acetyl-CoA biosynthesis; acetyl-CoA from acetate: step 1/2. Catalyzes the formation of acetyl phosphate from acetate and ATP. Can also catalyze the reverse reaction. This Mannheimia succiniciproducens (strain KCTC 0769BP / MBEL55E) protein is Acetate kinase.